Here is a 456-residue protein sequence, read N- to C-terminus: Glutathione reductase (456 aa).

FAD contacts are provided by S14, G15, E34, T41, C42, and K50. Glutathione is bound at residue S14. An intrachain disulfide couples C42 to C47. Y99 contributes to the glutathione binding site. Residue G115 coordinates FAD. A180, I183, E186, R203, R209, and G267 together coordinate NADP(+). D308 is a binding site for FAD. NADP(+) is bound at residue E315. T317 provides a ligand contact to FAD. R325 serves as a coordination point for glutathione. V348 contributes to the NADP(+) binding site. H445 serves as a coordination point for FAD. The Proton acceptor role is filled by H445.

The protein belongs to the class-I pyridine nucleotide-disulfide oxidoreductase family. In terms of assembly, homodimer. The cofactor is FAD.

It is found in the cytoplasm. It catalyses the reaction 2 glutathione + NADP(+) = glutathione disulfide + NADPH + H(+). Its function is as follows. Catalyzes the reduction of glutathione disulfide (GSSG) to reduced glutathione (GSH). Constitutes the major mechanism to maintain a high GSH:GSSG ratio in the cytosol. The polypeptide is Glutathione reductase (gor) (Haemophilus influenzae (strain ATCC 51907 / DSM 11121 / KW20 / Rd)).